We begin with the raw amino-acid sequence, 76 residues long: uncharacterized protein (76 aa).

Transmembrane regions (helical) follow at residues 1-21 (MTAIIVYSCLTMCVIYFHLQL), 35-55 (CFDIFLLLIEMLKLIFYLLII), and 56-76 (NNKFYIFIIISIALITINTMI).

Its subcellular location is the cell membrane. This is an uncharacterized protein from Borreliella burgdorferi (strain ATCC 35210 / DSM 4680 / CIP 102532 / B31) (Borrelia burgdorferi).